The following is a 354-amino-acid chain: MTIKLAIDCMGGDHGVAVTIPAAIQFLAAHEDVEMLLVGQPDVIAAELKRLHATAHSRIHVVAASEVVSMDDPVEVALRKKKDSSMRVAIKQVKDGAAQACVSAGNTGALMAVSRYVLKTLDGIDRPAIATAIPNEKGAGTTVLDLGANADCEPAHLLQFAQMASAMVSVVEHKPRPTVGLLNIGEEVIKGNEVVKQAGELLRASDLNFFGNVEGNDIFKGTTDIVVCDGFVGNVALKSTEGLAKMIGAMLREEFSRSWFTKLLAIVALPVLTRFKRRVDHRRYNGAALLGLRGLVIKSHGSADAYAFEWAIKRAYDAAANGVIARIAQAFESHHDPAGAAVPLSTSAPAADAA.

The protein belongs to the PlsX family. As to quaternary structure, homodimer. Probably interacts with PlsY.

Its subcellular location is the cytoplasm. The enzyme catalyses a fatty acyl-[ACP] + phosphate = an acyl phosphate + holo-[ACP]. Its pathway is lipid metabolism; phospholipid metabolism. Its function is as follows. Catalyzes the reversible formation of acyl-phosphate (acyl-PO(4)) from acyl-[acyl-carrier-protein] (acyl-ACP). This enzyme utilizes acyl-ACP as fatty acyl donor, but not acyl-CoA. This chain is Phosphate acyltransferase, found in Ralstonia nicotianae (strain ATCC BAA-1114 / GMI1000) (Ralstonia solanacearum).